A 263-amino-acid chain; its full sequence is UPF0739 protein C1orf74 homolog (263 aa).

Belongs to the UPF0739 family.

The chain is UPF0739 protein C1orf74 homolog from Rattus norvegicus (Rat).